The sequence spans 623 residues: Leucine-rich repeat, immunoglobulin-like domain and transmembrane domain-containing protein 1 (623 aa).

The N-terminal stretch at 1 to 21 (MRVALGMLWLLALAWPPQARG) is a signal peptide. The LRRNT domain occupies 22–59 (FCPSQCSCSLHIMGDGSKARTVVCNDPDMTLPPASIPP). The Lumenal portion of the chain corresponds to 22–526 (FCPSQCSCSL…EVVDAENTQQ (505 aa)). 5 LRR repeats span residues 60 to 81 (DTSR…AFRP), 84 to 105 (RLEQ…MLRG), 108 to 129 (RLRE…ALRD), 132 to 153 (KLRL…AARF), and 156 to 177 (NLTF…LIVS). N156 carries N-linked (GlcNAc...) asparagine glycosylation. Positions 201-253 (NPWACDCRLYDLVHLLDGWAPNLAFIETELRCASPRSLAGVAFSQLELRKCQG) constitute an LRRCT domain. An Ig-like C2-type domain is found at 266–335 (LLGGTALLRC…YICQAKNFLG (70 aa)). C275 and C328 are disulfide-bonded. N-linked (GlcNAc...) asparagine glycans are attached at residues N296 and N455. Positions 430 to 518 (MVRSVKVVGD…QCVIFSTNEV (89 aa)) constitute a Fibronectin type-III domain. The chain crosses the membrane as a helical span at residues 527-547 (LINVVVISVAIVIALPLTLLV). The Cytoplasmic segment spans residues 548–623 (CCSALQKRCR…GGRRINEYFC (76 aa)). An LRR 6 repeat occupies 571 to 594 (YVNLERLGYSEDGLEELSRHSVSE).

In terms of assembly, may form a homodimer. Interacts with LRIT2; may form a heterodimer with LRIT2. Interacts (via its N-terminal extracellular domain) with metabotropic glutamate receptor GRM6. Interacts (via its extreme C-terminus) with the scaffold protein FRMPD2 (via the third PDZ domain); the interaction leads to their colocalization in photoreceptor synapses.

The protein resides in the endoplasmic reticulum membrane. It is found in the cell projection. Its subcellular location is the dendrite. Photoreceptor synaptic protein essential for normal vision. Involved in synapse formation in cone photoreceptor cells. This Homo sapiens (Human) protein is Leucine-rich repeat, immunoglobulin-like domain and transmembrane domain-containing protein 1 (LRIT1).